A 210-amino-acid chain; its full sequence is Hydrogenase expression/formation protein HupD (210 aa).

Ni(2+)-binding residues include Glu-22, Asp-68, and His-99.

Belongs to the peptidase A31 family.

Not known. Could be involved in the processing of hydrogenase. The polypeptide is Hydrogenase expression/formation protein HupD (hupD) (Rhodobacter capsulatus (Rhodopseudomonas capsulata)).